The chain runs to 154 residues: Ribonuclease H (154 aa).

Residues 1–142 (MLKHIDLYTD…CDELARDAAS (142 aa)) enclose the RNase H type-1 domain. 4 residues coordinate Mg(2+): aspartate 10, glutamate 48, aspartate 70, and aspartate 134. Residues 126–147 (GHPENERCDELARDAASGKELA) show a composition bias toward basic and acidic residues. The tract at residues 126-154 (GHPENERCDELARDAASGKELAEDTGYQP) is disordered.

Belongs to the RNase H family. In terms of assembly, monomer. It depends on Mg(2+) as a cofactor.

The protein localises to the cytoplasm. It catalyses the reaction Endonucleolytic cleavage to 5'-phosphomonoester.. Endonuclease that specifically degrades the RNA of RNA-DNA hybrids. The chain is Ribonuclease H from Aeromonas salmonicida (strain A449).